The chain runs to 982 residues: Protein phosphatase 1 regulatory subunit 12B (982 aa).

A compositionally biased stretch (basic and acidic residues) spans 1–24; the sequence is MAELEHLGGKRAESARMRRAEQLR. Residues 1–50 are disordered; sequence MAELEHLGGKRAESARMRRAEQLRRWRGSLTEQEPAERRGAGRQPLTRRG. Position 29 is a phosphoserine (serine 29). ANK repeat units follow at residues 57 to 86, 90 to 119, 123 to 152, 216 to 245, and 249 to 278; these read EDGAVFLAACSSGDTDEVRKLLARGADINT, DGLTALHQACIDENLDMVKFLVENRANVNQ, EGWTPLHAAASCGYLNIAEYFINHGASVGI, SGATALHVAAAKGYSEVLRLLIQAGYELNV, and DGWTPLHAAAHWGVKEACSILAEALCDMDI. Disordered stretches follow at residues 342–517, 556–579, 606–864, and 918–948; these read EETP…RESA, RTPHKSQADTTAEKTADNVSSSTP, TDSS…EARE, and AQQKQEKTSDRSSVLEMEKRERRALERKMSE. The segment covering 362 to 374 has biased composition (acidic residues); it reads SEEEEGEDEASES. The span at 375 to 385 shows a compositional bias: basic and acidic residues; the sequence is ETEKEADKKPE. Over residues 389–401 the composition is skewed to polar residues; the sequence is NHSNSESKSSITE. The span at 411–421 shows a compositional bias: low complexity; the sequence is FSASSARRFSS. Position 445 is a phosphothreonine (threonine 445). A compositionally biased stretch (low complexity) spans 466–478; the sequence is SSIYRSSSSPRIS. Residues 482–491 show a composition bias toward basic and acidic residues; sequence DNKDKERENK. The span at 623 to 632 shows a compositional bias: basic and acidic residues; that stretch reads VRDEEAESLR. Over residues 633-643 the composition is skewed to basic residues; sequence KARSRQARQTR. Threonine 646 carries the phosphothreonine modification. The segment covering 656 to 680 has biased composition (basic and acidic residues); it reads EAERTFSRSRAERQAQEQPREKPTD. Low complexity predominate over residues 731–742; that stretch reads TTPASPSTSRPS. Residues 743–755 show a composition bias toward polar residues; it reads LYTSSHLLWTNRF. Over residues 797 to 807 the composition is skewed to basic residues; it reads ERRRPKERRRG. Threonine 808 is modified (phosphothreonine). A compositionally biased stretch (basic and acidic residues) spans 824–836; sequence EEVKETWHERLSR. Residue serine 839 is modified to Phosphoserine. A compositionally biased stretch (polar residues) spans 840–849; sequence GGSNPTTSDS. Basic and acidic residues-rich tracts occupy residues 850–864, 918–927, and 933–948; these read YGDRASARARREARE, AQQKQEKTSD, and EMEKRERRALERKMSE. Serine 947 bears the Phosphoserine mark.

PP1 comprises a catalytic subunit, PPP1CA, PPP1CB or PPP1CC, and one or several targeting or regulatory subunits. PPP1R12B mediates binding to myosin. Isoform 3 and isoform 4 bind PPP1R12A, but not isoform 1 of PPP1R12B itself. Binds IL16. As to expression, detected in skeletal muscle, fetal and adult heart, brain, placenta, kidney, spleen, thymus, pancreas and lung. Isoform 3 and isoform 4 are heart specific.

It is found in the cytoplasm. The protein localises to the cytoskeleton. The protein resides in the stress fiber. In terms of biological role, regulates myosin phosphatase activity. Augments Ca(2+) sensitivity of the contractile apparatus. The chain is Protein phosphatase 1 regulatory subunit 12B (PPP1R12B) from Homo sapiens (Human).